The sequence spans 703 residues: MAASEVAGVVANAPSPPESSSLCASKSDEGLPDGLSTKDSAQKQKNSPLLSVSSQTITKENNRNVHLEHSEQNPGSSAGDTSAAHQVVLGENLIATALCLSGSGSQSDLKDVASTAGEEGDTSLRESLHPVTRSLKAGCHTKQLASRNCSEEKSPQTSILKEGNRDTSLDFRPVVSPANGVEGVRVDQDDDQDSSSLKLSQNIAVQTDFKTADSEVNTDQDIEKNLDKMMTERTLLKERYQEVLDKQRQVENQLQVQLKQLQQRREEEMKNHQEILKAIQDVTIKREETKKKIEKEKKEFLQKEQDLKAEIEKLCEKGRREVWEMELDRLKNQDGEINRNIMEETERAWKAEILSLESRKELLVLKLEEAEKEAELHLTYLKSTPPTLETVRSKQEWETRLNGVRIMKKNVRDQFNSHIQLVRNGAKLSSLPQIPTPTLPPPPSETDFMLQVFQPSPSLAPRMPFSIGQVTMPMVMPSADPRSLSFPILNPALSQPSQPSSPLPGSHGRNSPGLGSLVSPHGPHMPPAASIPPPPGLGGVKASAETPRPQPVDKLEKILEKLLTRFPQCNKAQMTNILQQIKTARTTMAGLTMEELIQLVAARLAEHERVAASTQPLGRIRALFPAPLAQISTPMFLPSAQVSYPGRSSHAPATCKLCLMCQKLVQPSELHPMACTHVLHKECIKFWAQTNTNDTCPFCPTLK.

3 disordered regions span residues 1–59 (MAAS…TITK), 104–134 (GSQS…VTRS), and 146–197 (SRNC…SSSL). Residue Ala2 is modified to N-acetylalanine. A phosphoserine mark is found at Ser15, Ser40, Ser47, and Ser54. Residues 37–59 (TKDSAQKQKNSPLLSVSSQTITK) show a composition bias toward polar residues. Residues Ser176 and Ser196 each carry the phosphoserine modification. Residues 220–379 (QDIEKNLDKM…AEKEAELHLT (160 aa)) are a coiled coil. Residues 486–552 (FPILNPALSQ…SAETPRPQPV (67 aa)) are disordered. The segment covering 493–504 (LSQPSQPSSPLP) has biased composition (low complexity). Ser497, Ser511, and Ser516 each carry phosphoserine. A compositionally biased stretch (pro residues) spans 523–536 (PHMPPAASIPPPPG). Residues 658 to 700 (CLMCQKLVQPSELHPMACTHVLHKECIKFWAQTNTNDTCPFCP) form an RING-type; atypical zinc finger.

This is RING finger protein 214 (RNF214) from Homo sapiens (Human).